An 824-amino-acid chain; its full sequence is Probable receptor-like protein kinase At5g24010 (824 aa).

The first 24 residues, 1–24 (MAFPINLTQTLLFFFCPLLHLSFA), serve as a signal peptide directing secretion. Residues Asn6, Asn41, Asn204, Asn227, and Asn291 are each glycosylated (N-linked (GlcNAc...) asparagine). The Extracellular segment spans residues 25–406 (AFTPTDNYLI…SSEVVSGKRN (382 aa)). The chain crosses the membrane as a helical span at residues 407-427 (VVWIVVGSVLGGFVFLSLFFL). Topologically, residues 428-824 (SVLCLCRRKN…FSQLMTNAGR (397 aa)) are cytoplasmic. Positions 440–467 (TRSSESTGWTPLRRFRGSSNSRTTERTV) are disordered. Positions 456–467 (GSSNSRTTERTV) are enriched in polar residues. A Protein kinase domain is found at 489 to 764 (FDRSLVIGVG…VLWNLEHVLQ (276 aa)). ATP contacts are provided by residues 495–503 (IGVGGFGMV) and Lys517. The Proton acceptor role is filled by Asp613. Positions 777–803 (DYGDVTDPRTARQGLSNGSNIERDYGD) are disordered.

Belongs to the protein kinase superfamily. Ser/Thr protein kinase family.

Its subcellular location is the membrane. The sequence is that of Probable receptor-like protein kinase At5g24010 from Arabidopsis thaliana (Mouse-ear cress).